A 129-amino-acid chain; its full sequence is UPF0344 protein SAB0838 (129 aa).

4 helical membrane passes run 1–21 (MLHLHILSWVLAIILFIATYL), 36–56 (LHMVLRLFMLLMLISGFWILI), 67–87 (MLLTLKMLCGVAVVGLMEVSI), and 99–119 (MFWITIALIIITMVLGVILPL).

Belongs to the UPF0344 family.

The protein localises to the cell membrane. The protein is UPF0344 protein SAB0838 of Staphylococcus aureus (strain bovine RF122 / ET3-1).